A 377-amino-acid polypeptide reads, in one-letter code: MQTSLDRTSTRSGIRLLLFAQGRANIEELAEQLRRHIQGLPGQHPAHLKVVPLEEHPYLAEHYKLVVTPALVKAEPLPAQVLAGEDLATQLEVWWPRWQGQAALVSYQEEAGQDPAPPPTTEALLQMSEEVFSLRQERAQLREQLDFKDRVLAMLVHDLRSPLTATALAVETLQQGREGSLDKAVERQLFEHARQQLRKMDSMITDILESARGSASELRIRAVETQLASLCQPVIEELLPRIQAKQLQFQADIPVDLPTVHVDPDKIRQVIFNLLDNAIKYTPAGGSIRLNILHRTSQKVQVTVSDTGPGIPEAEQENIFSDAVRLSRDQQQEGYGIGLSLCRRIVRAHYGQIWVESILGKGSSFHFTLPVYRLCGR.

The Histidine kinase domain occupies 154–373; it reads MLVHDLRSPL…SFHFTLPVYR (220 aa). At His157 the chain carries Phosphohistidine; by autocatalysis.

Homooligomerizes. Interacts with KaiC. Participates in the KaiABC clock complex, whose core is composed of a KaiC homohexamer, 6 KaiB and up to 6 KaiA dimers. SasA and KaiB(fs) compete to bind to KaiC.

The catalysed reaction is ATP + protein L-histidine = ADP + protein N-phospho-L-histidine.. Functionally, member of the two-component regulatory system SasA/RpaA involved in genome-wide circadian gene expression. One of several clock output pathways. Participates in the Kai clock protein complex, the main circadian regulator in cyanobacteria, via its interaction with KaiC. KaiC enhances the autophosphorylation activity of SasA, which then transfers its phosphate group to RpaA to activate it. In addition to its output function, recruits fold-shifted KaiB (KaiB(fs)) to KaiC to cooperatively form the KaiB(6):KaiC(6) complex (independent of SasA kinase activity). Required for robustness of the circadian rhythm of gene expression and is involved in clock output, also required for adaptation to light/dark cycles. The protein is Adaptive-response sensory kinase SasA of Synechococcus sp. (strain JA-3-3Ab) (Cyanobacteria bacterium Yellowstone A-Prime).